Consider the following 479-residue polypeptide: Aspartyl/glutamyl-tRNA(Asn/Gln) amidotransferase subunit B (479 aa).

Belongs to the GatB/GatE family. GatB subfamily. Heterotrimer of A, B and C subunits.

The catalysed reaction is L-glutamyl-tRNA(Gln) + L-glutamine + ATP + H2O = L-glutaminyl-tRNA(Gln) + L-glutamate + ADP + phosphate + H(+). It catalyses the reaction L-aspartyl-tRNA(Asn) + L-glutamine + ATP + H2O = L-asparaginyl-tRNA(Asn) + L-glutamate + ADP + phosphate + 2 H(+). In terms of biological role, allows the formation of correctly charged Asn-tRNA(Asn) or Gln-tRNA(Gln) through the transamidation of misacylated Asp-tRNA(Asn) or Glu-tRNA(Gln) in organisms which lack either or both of asparaginyl-tRNA or glutaminyl-tRNA synthetases. The reaction takes place in the presence of glutamine and ATP through an activated phospho-Asp-tRNA(Asn) or phospho-Glu-tRNA(Gln). This chain is Aspartyl/glutamyl-tRNA(Asn/Gln) amidotransferase subunit B, found in Mesoplasma florum (strain ATCC 33453 / NBRC 100688 / NCTC 11704 / L1) (Acholeplasma florum).